The sequence spans 460 residues: Muscarinic acetylcholine receptor M1 (460 aa).

Over 1-22 the chain is Extracellular; sequence MNTSAPPAVSPNITVLAPGKGP. 2 N-linked (GlcNAc...) asparagine glycosylation sites follow: Asn2 and Asn12. The helical transmembrane segment at 23–48 threads the bilayer; that stretch reads WQVAFIGITTGLLSLATVTGNLLVLI. Residues 49–62 are Cytoplasmic-facing; sequence SFKVNTELKTVNNY. The chain crosses the membrane as a helical span at residues 63–84; it reads FLLSLACADLIIGTFSMNLYTT. At 85–95 the chain is on the extracellular side; sequence YLLMGHWALGT. Residues 96–121 traverse the membrane as a helical segment; it reads LACDLWLALDYVASNASVMNLLLISF. An intrachain disulfide couples Cys98 to Cys178. Over 122-142 the chain is Cytoplasmic; that stretch reads DRYFSVTRPLSYRAKRTPRRA. A helical membrane pass occupies residues 143 to 164; the sequence is ALMIGLAWLVSFVLWAPAILFW. Residues 165–185 lie on the Extracellular side of the membrane; that stretch reads QYLVGERTVLAGQCYIQFLSQ. The helical transmembrane segment at 186-209 threads the bilayer; that stretch reads PIITFGTAMAAFYLPVTVMCTLYW. Residues 210–366 lie on the Cytoplasmic side of the membrane; sequence RIYRETENRA…LVKEKKAART (157 aa). 3 disordered regions span residues 225–256, 274–297, and 310–351; these read LQGS…ETPP, WKEE…EEPG, and EAQA…QLAK. The residue at position 230 (Thr230) is a Phosphothreonine. Low complexity predominate over residues 238 to 247; the sequence is SSSSERSQPG. A compositionally biased stretch (basic residues) spans 328–343; the sequence is RPTKKGRDRAGKGQKP. Residues 367–390 form a helical membrane-spanning segment; the sequence is LSAILLAFILTWTPYNIMVLVSTF. Over 391–397 the chain is Extracellular; sequence CKDCVPE. The helical transmembrane segment at 398–420 threads the bilayer; the sequence is TLWELGYWLCYVNSTINPMCYAL. Residues 421–460 are Cytoplasmic-facing; the sequence is CNKAFRDTFRLLLLCRWDKRRWRKIPKRPGSVHRTPSRQC. Position 428 is a phosphothreonine (Thr428). Ser451 carries the post-translational modification Phosphoserine. A Phosphothreonine modification is found at Thr455. Residue Ser457 is modified to Phosphoserine.

This sequence belongs to the G-protein coupled receptor 1 family. Muscarinic acetylcholine receptor subfamily. CHRM1 sub-subfamily. In terms of assembly, interacts with GPRASP2. Interacts with TMEM147.

It is found in the cell membrane. The protein resides in the postsynaptic cell membrane. In terms of biological role, the muscarinic acetylcholine receptor mediates various cellular responses, including inhibition of adenylate cyclase, breakdown of phosphoinositides and modulation of potassium channels through the action of G proteins. Primary transducing effect is Pi turnover. The sequence is that of Muscarinic acetylcholine receptor M1 (CHRM1) from Homo sapiens (Human).